The following is a 258-amino-acid chain: Ciliogenesis and planar polarity effector 2 (258 aa).

Positions 50–258 are small GTPase-like; it reads SIDTASYKIF…LPNPPESAPE (209 aa). Positions 64, 65, 67, 68, 69, 70, 82, 84, 87, 176, 178, and 206 each coordinate GTP.

It belongs to the small GTPase superfamily. Rab family. Interacts with FUZ. Associates with the CPLANE (ciliogenesis and planar polarity effectors) complex via its interaction with FUZ.

It localises to the cytoplasm. The protein resides in the cytoskeleton. Its subcellular location is the cilium basal body. The protein localises to the microtubule organizing center. It is found in the centrosome. It localises to the centriole. In terms of biological role, required for efficient primary cilia initiation, regulating a late step in cilia initiation. Plays a role in the final maturation of the mother centriole and ciliary vesicle that allows extension of the ciliary axoneme. The protein is Ciliogenesis and planar polarity effector 2 of Homo sapiens (Human).